The sequence spans 226 residues: PKHD-type hydroxylase Pfl01_0799 (226 aa).

Positions 78–178 (KVFPPLLNCY…RYASFFWTQS (101 aa)) constitute a Fe2OG dioxygenase domain. Histidine 96, aspartate 98, and histidine 159 together coordinate Fe cation. Arginine 169 lines the 2-oxoglutarate pocket.

It depends on Fe(2+) as a cofactor. The cofactor is L-ascorbate.

This Pseudomonas fluorescens (strain Pf0-1) protein is PKHD-type hydroxylase Pfl01_0799.